Reading from the N-terminus, the 2850-residue chain is Mucin-6 (2850 aa).

A signal peptide spans 1 to 22 (MLRVRQLLLLLLFRGPLIDAGA). The VWFD 1 domain maps to 43–256 (GWCSTWGAGH…KLDDPNEICA (214 aa)). 2 disulfide bridges follow: cysteine 45–cysteine 218 and cysteine 67–cysteine 255. A glycan (N-linked (GlcNAc...) asparagine) is linked at asparagine 94. The segment at 160–183 (HLTEGQGGDEVGTPGTLKQESKGS) is disordered. Residue asparagine 310 is glycosylated (N-linked (GlcNAc...) asparagine). One can recognise a TIL 1 domain in the interval 344–399 (CPANQVYQECGEVCIKTCSNPQHSCSSPCTFGCFCPHGTLLDDISGNQSCVPVNQC). In terms of domain architecture, VWFD 2 spans 437 to 621 (GHCSLEGGSF…ALEREMDPCS (185 aa)). Intrachain disulfides connect cysteine 439/cysteine 575 and cysteine 461/cysteine 620. N-linked (GlcNAc...) asparagine glycans are attached at residues asparagine 528 and asparagine 701. A TIL 2 domain is found at 806-869 (CPEPKTFQSC…DGQCVPAEEC (64 aa)). Residues 908–1080 (STCVLYGEGH…NSWKESPLCG (173 aa)) form the VWFD 3 domain. Disulfide bonds link cysteine 910/cysteine 1044, cysteine 932/cysteine 1079, cysteine 941/cysteine 1041, and cysteine 959/cysteine 966. 2 N-linked (GlcNAc...) asparagine glycosylation sites follow: asparagine 1017 and asparagine 1221. Low complexity predominate over residues 1263–1281 (EFHSSTSANTPVAPSYLPG). Disordered regions lie at residues 1263-1363 (EFHS…TAEL), 1377-1400 (GMST…THRV), 1466-1504 (VSAN…PSTT), 1580-1600 (TPPV…RTTH), 1626-1650 (IASP…TSSV), 1705-1813 (TKTS…SLST), 1877-1942 (QTKS…RTTH), 1968-1992 (IASP…TSSV), 2049-2119 (TSFS…PSTT), 2219-2254 (QTKS…TTNS), 2276-2295 (IAHT…SSTT), 2306-2338 (EQST…SPTD), 2370-2473 (TTPP…FRTP), 2511-2621 (PTNP…TFVS), 2634-2674 (PTIH…KSTT), and 2692-2761 (STMG…GTCS). A compositionally biased stretch (polar residues) spans 1294-1312 (EELTVWTTPKESTVSSGEY). Residues 1345–1363 (TSKPTASSLSSSTKTTAEL) are compositionally biased toward low complexity. Composition is skewed to polar residues over residues 1378-1399 (MSTS…TTHR) and 1466-1484 (VSAN…PVVH). Repeat copies occupy residues 1440-1555 (TQNL…PTTE), 1556-1712 (GLNT…FSTD), 1713-1885 (RTST…FSTD), 1886-2054 (RTSA…FSTD), 2055-2227 (RTST…FSTD), 2228-2396 (RTST…FSTE), 2397-2563 (RTST…FPTT), and 2564-2671 (RTST…FSSK). Positions 1440-2671 (TQNLFSTAPH…VPTFSSFSSK (1232 aa)) are approximate repeats. Residues 1485 to 1504 (TTSGTSSSPQTPRTTHPSTT) show a composition bias toward low complexity. Residues 1626–1639 (IASPTPSAPQTSLA) are compositionally biased toward polar residues. A compositionally biased stretch (low complexity) spans 1705 to 1719 (TKTSFSTDRTSTSTS). The segment covering 1720–1757 (APHLSETSAVTAHQSTPTAVSANSIKPTMSSTGTPVVH) has biased composition (polar residues). Low complexity predominate over residues 1758–1777 (TTSGTTSSPQTPRTTHPSTT). Residues 1778–1813 (VAVSGTVHTTGLPSGTSVHTTTNFPTHSGPQSSLST) are compositionally biased toward polar residues. Low complexity predominate over residues 1893–1942 (SQPSTVTPTQSTPIPATTNSLMTTGGLTGTPPVHTTSGTTSSPQTPRTTH). The span at 1968-1981 (IASPTPSAPQTSLA) shows a compositional bias: polar residues. The segment covering 2049 to 2061 (TSFSTDRTSTSTS) has biased composition (low complexity). Residues 2062-2099 (APHLSETSAVTAHQSTPTAVSANSIKPTMSSTGTPVVH) are compositionally biased toward polar residues. The segment covering 2100–2119 (TTSGTTSSPQTPRTTHPSTT) has biased composition (low complexity). Residues 2227 to 2238 (DRTSTPHLSQSS) are compositionally biased toward polar residues. Low complexity predominate over residues 2282–2295 (TTHSLPTAASSSTT). The segment covering 2370-2384 (TTPPNTSTPVTHSTS) has biased composition (low complexity). Over residues 2385 to 2429 (ATTEAQGSFSTERTSTSYLSHPSSTTVHQSTAGPVITSIKSTMGV) the composition is skewed to polar residues. Low complexity predominate over residues 2436 to 2456 (HTTSGTTSSPQTPHSTHPIST). Over residues 2457 to 2466 (AAISRTTGIS) the composition is skewed to polar residues. The segment covering 2516–2533 (SVSSASTSRPLSTSLPTT) has biased composition (low complexity). The segment covering 2534–2560 (IKGTGTPQTPVSDINTTSATTQAHSSF) has biased composition (polar residues). A compositionally biased stretch (low complexity) spans 2561–2584 (PTTRTSTSHLSLPSSMTSTLTPAS). Residues 2585–2601 (RSASTLQYTPTPSSVSH) are compositionally biased toward polar residues. Low complexity predominate over residues 2639 to 2674 (TPTPSSRPTSSTGLLSTSKTTSHVPTFSSFSSKSTT). The span at 2692–2725 (STMGMTNLPSSGSPDINHTTRPPGSSPLPTSAFL) shows a compositional bias: polar residues. Residues 2726–2759 (SRSTSPTGSSSPSTPVSSSNPDSSVSSPPSHPGT) show a composition bias toward low complexity. Disulfide bonds link cysteine 2760–cysteine 2807, cysteine 2774–cysteine 2821, cysteine 2783–cysteine 2841, and cysteine 2787–cysteine 2843. The 90-residue stretch at 2760–2849 (CSLQEEEHQI…SCVCSPLQCK (90 aa)) folds into the CTCK domain.

In terms of assembly, multimer; disulfide-linked. Post-translationally, O-glycosylated. Expressed in stomach, duodenum and small intestine.

Its subcellular location is the secreted. May provide a mechanism for modulation of the composition of the protective mucus layer related to acid secretion or the presence of bacteria and noxious agents in the lumen. Plays an important role in the cytoprotection of epithelial surfaces and are used as tumor markers in a variety of cancers. May play a role in epithelial organogenesis. The protein is Mucin-6 (Muc6) of Mus musculus (Mouse).